A 108-amino-acid chain; its full sequence is Class I hydrophobin 3 (108 aa).

Positions 1–17 (MFFQTTIVAALAFLAVA) are cleaved as a signal peptide. Intrachain disulfides connect Cys-28–Cys-87, Cys-35–Cys-81, Cys-36–Cys-69, and Cys-88–Cys-101. Asn-37 carries an N-linked (GlcNAc...) asparagine glycan.

Belongs to the fungal hydrophobin family. As to quaternary structure, self-assembles to form functional amyloid fibrils called rodlets. Self-assembly into fibrillar rodlets occurs spontaneously at hydrophobic:hydrophilic interfaces and the rodlets further associate laterally to form amphipathic monolayers.

It is found in the secreted. It localises to the cell wall. Functionally, aerial growth, conidiation, and dispersal of filamentous fungi in the environment rely upon a capability of their secreting small amphipathic proteins called hydrophobins (HPBs) with low sequence identity. Class I can self-assemble into an outermost layer of rodlet bundles on aerial cell surfaces, conferring cellular hydrophobicity that supports fungal growth, development and dispersal; whereas Class II form highly ordered films at water-air interfaces through intermolecular interactions but contribute nothing to the rodlet structure. Vmh3 is a class I hydrophobin that is essential for the maintenance of the surface hydrophobicity of the mycelium and might be involved in the development of fruiting bodies. Plays an important role in hyphal resistance against environmental stress. Necessary for the efficient biodegradation of lignin. This chain is Class I hydrophobin 3, found in Pleurotus ostreatus (Oyster mushroom).